The sequence spans 89 residues: Small ribosomal subunit protein uS15 (89 aa).

The protein belongs to the universal ribosomal protein uS15 family. In terms of assembly, part of the 30S ribosomal subunit. Forms a bridge to the 50S subunit in the 70S ribosome, contacting the 23S rRNA.

One of the primary rRNA binding proteins, it binds directly to 16S rRNA where it helps nucleate assembly of the platform of the 30S subunit by binding and bridging several RNA helices of the 16S rRNA. In terms of biological role, forms an intersubunit bridge (bridge B4) with the 23S rRNA of the 50S subunit in the ribosome. The sequence is that of Small ribosomal subunit protein uS15 from Nitrosococcus oceani (strain ATCC 19707 / BCRC 17464 / JCM 30415 / NCIMB 11848 / C-107).